The chain runs to 2322 residues: Protein sidekick homolog (2322 aa).

Positions 1–26 (MNYRIFLLFCTTTVLWSVVSTQLVLG) are cleaved as a signal peptide. Residues 27 to 2020 (KPPIFQNTGP…IPDDPFYTTW (1994 aa)) are Extracellular-facing. Ig-like C2-type domains lie at 28 to 105 (PPIF…AAIS), 217 to 319 (PSLQ…AYLT), and 324 to 397 (PVLK…ADMS). 3 disulfide bridges follow: Cys-52–Cys-94, Cys-247–Cys-301, and Cys-345–Cys-386. Asn-408 is a glycosylation site (N-linked (GlcNAc...) asparagine). 2 consecutive Ig-like C2-type domains span residues 450 to 545 (PFTS…VQVN) and 548 to 639 (SLIE…AMLQ). 2 disulfide bridges follow: Cys-481–Cys-529 and Cys-569–Cys-623. N-linked (GlcNAc...) asparagine glycosylation is found at Asn-633 and Asn-656. 13 Fibronectin type-III domains span residues 646–752 (MPER…MPQQ), 757–854 (APRN…TAEG), 859–958 (APKN…TEED), 962–1056 (AVDE…VPPE), 1060–1155 (RPSM…TLQT), 1160–1255 (PSQR…TYES), 1260–1360 (SPRN…TLED), 1364–1458 (PPES…SSVR), 1464–1567 (APAP…TLPS), 1572–1672 (QPIS…VGYS), 1674–1774 (PKRN…LEDK), 1777–1873 (PVGV…SKDG), and 1908–2010 (QAKR…VPES). A disordered region spans residues 732-762 (SNKHGPGKPSLPSSSVTMPQQPPSAAPRNVA). 4 N-linked (GlcNAc...) asparagine glycosylation sites follow: Asn-808, Asn-869, Asn-933, and Asn-1017. The segment covering 1040 to 1049 (GDGPVEETKF) has biased composition (basic and acidic residues). A disordered region spans residues 1040-1060 (GDGPVEETKFESGVPPELPGR). Asn-1108 carries N-linked (GlcNAc...) asparagine glycosylation. The disordered stretch occupies residues 1139-1163 (GRGAPSEPSRTFETLQTNPETPSQR). The segment covering 1146-1163 (PSRTFETLQTNPETPSQR) has biased composition (polar residues). N-linked (GlcNAc...) asparagine glycosylation is found at Asn-1615, Asn-1677, and Asn-1864. The disordered stretch occupies residues 1916 to 1965 (EETENGYVSQRPRRNEIRGAKSAAQTSASSNSNRPTHPIGEWITLRPTDG). Low complexity predominate over residues 1935–1947 (AKSAAQTSASSNS). Residues 2021 to 2041 (WFMALVAMAAFVLIVIIIAIL) traverse the membrane as a helical segment. At 2042–2322 (CVTGSSAKYR…NLTAGFSSFV (281 aa)) the chain is on the cytoplasmic side. Disordered stretches follow at residues 2081-2114 (NMTR…SVLG), 2167-2254 (YVVS…ADDI), and 2276-2322 (MVRA…SSFV). Residues 2092–2101 (PGTTQSWLSD) are compositionally biased toward polar residues. Residues 2207-2223 (PSSSGGSQPQGSPQQQQ) show a composition bias toward low complexity. Residues 2227 to 2238 (DSFDEEDDVDDD) are compositionally biased toward acidic residues. Composition is skewed to polar residues over residues 2282–2302 (LTNQ…STSE) and 2310–2322 (ATPN…SSFV).

This sequence belongs to the sidekick family.

Its subcellular location is the membrane. Functionally, cell adhesion protein. In Caenorhabditis briggsae, this protein is Protein sidekick homolog (rig-4).